The following is a 532-amino-acid chain: FRIGIDA-like protein 4b (532 aa).

Belongs to the Frigida family. Expressed in leaves, shoot apex, flowers and during seed development.

In Arabidopsis thaliana (Mouse-ear cress), this protein is FRIGIDA-like protein 4b (FRL4B).